Here is a 454-residue protein sequence, read N- to C-terminus: Replicative DNA helicase DnaC (454 aa).

The SF4 helicase domain maps to 179–445; that stretch reads RKGDITGIPT…NKFVNLERRF (267 aa). Residue 210–217 participates in ATP binding; the sequence is ARPSVGKT.

Belongs to the helicase family. DnaB subfamily. In terms of assembly, the DNA replisome assembles sequentially on oriC in this order; DnaA, DnaD, DnaB, DnaI-DnaC helicase. Monomer in the absence of ATP, in its presence forms a probable homohexamer which is not active as a helicase in vitro. Interacts separately and simultaneously with helicase loaders DnaB and DnaI. Interaction with DnaB does not require ATP. Interaction with DnaI requires ATP, probably forms a DnaC(6):DnaI(6) complex, which is not active as a helicase.

Its subcellular location is the cytoplasm. It is found in the nucleoid. It carries out the reaction Couples ATP hydrolysis with the unwinding of duplex DNA at the replication fork by translocating in the 5'-3' direction. This creates two antiparallel DNA single strands (ssDNA). The leading ssDNA polymer is the template for DNA polymerase III holoenzyme which synthesizes a continuous strand.. It catalyses the reaction ATP + H2O = ADP + phosphate + H(+). Functionally, the main replicative DNA helicase, it participates in initiation and elongation during chromosome replication. Travels ahead of the DNA replisome, separating dsDNA into templates for DNA synthesis. The monomer has helicase activity in the presence of DnaI which is further increased by DnaB; the purified oligomeric form (probably a DnaC hexamer) does not have helicase activity in vitro, nor does the DnaC(6):DnaI(6) complex. The direction was not determined but is probably 5'-3'. Helicase activity requires an rNTP and is inactive with dNTPs. Has weak ATPase activity as a monomer, as an oligomer has ATPase activity which is stimulated by single-stranded (ss)DNA and further stimulated by DnaI and more by DnaB. Deletion of a single T residue in the promoter region (a run of 8 Ts becomes 7 Ts) decreases the helicase levels by 50%, decreasing DNA replication inititation during fast growth in rich medium. Suppresses the synthetic lethality of a dnaA1-yabA deletion for growth on rich medium. This is Replicative DNA helicase DnaC from Bacillus subtilis (strain 168).